A 160-amino-acid chain; its full sequence is pH-gated potassium channel KcsA (160 aa).

The Cytoplasmic portion of the chain corresponds to 1 to 27 (MPPMLSGLLARLVKLLLGRHGSALHWR). Residues 28 to 50 (AAGAATVLLVIVLLAGSYLAVLA) traverse the membrane as a helical segment. The Extracellular segment spans residues 51 to 61 (ERGAPGAQLIT). The helical; Pore-forming intramembrane region spans 62–72 (YPRALWWSVET). The segment at residues 73-80 (ATTVGYGD) is an intramembrane region (pore-forming). The Selectivity filter signature appears at 75–80 (TVGYGD). At 81 to 87 (LYPVTLW) the chain is on the extracellular side. Residues 88–111 (GRLVAVVVMVAGITSFGLVTAALA) traverse the membrane as a helical segment. The Cytoplasmic portion of the chain corresponds to 112–160 (TWFVGREQERRGHFVRHSEKAAEEAYTRTTRALHERFDRLERMLDDNRR).

The protein belongs to the potassium channel family. In terms of assembly, homotetramer.

Its subcellular location is the cell membrane. Acts as a pH-gated potassium ion channel; changing the cytosolic pH from 7 to 4 opens the channel. The polypeptide is pH-gated potassium channel KcsA (kcsA) (Streptomyces coelicolor (strain ATCC BAA-471 / A3(2) / M145)).